Reading from the N-terminus, the 336-residue chain is Protein-glutamate methylesterase/protein-glutamine glutaminase 3 (336 aa).

The Response regulatory domain maps to 2-119 (KIAIVNDMPM…PNPREAAAPL (118 aa)). D53 carries the 4-aspartylphosphate modification. Residues 147–336 (VSRRDRLVAI…APRLMEVFTQ (190 aa)) enclose the CheB-type methylesterase domain. Catalysis depends on residues S159, H186, and D279.

Belongs to the CheB family. In terms of processing, phosphorylated by CheA. Phosphorylation of the N-terminal regulatory domain activates the methylesterase activity.

It localises to the cytoplasm. It catalyses the reaction [protein]-L-glutamate 5-O-methyl ester + H2O = L-glutamyl-[protein] + methanol + H(+). The enzyme catalyses L-glutaminyl-[protein] + H2O = L-glutamyl-[protein] + NH4(+). Functionally, involved in chemotaxis. Part of a chemotaxis signal transduction system that modulates chemotaxis in response to various stimuli. Catalyzes the demethylation of specific methylglutamate residues introduced into the chemoreceptors (methyl-accepting chemotaxis proteins or MCP) by CheR. Also mediates the irreversible deamidation of specific glutamine residues to glutamic acid. In Pseudomonas syringae pv. tomato (strain ATCC BAA-871 / DC3000), this protein is Protein-glutamate methylesterase/protein-glutamine glutaminase 3.